Here is a 334-residue protein sequence, read N- to C-terminus: Beta-hexosaminidase (334 aa).

Residues Asp-62, Arg-70, Arg-131, and 161–162 (KH) contribute to the substrate site. The active-site Proton donor/acceptor is the His-174. The active-site Nucleophile is Asp-246.

The protein belongs to the glycosyl hydrolase 3 family. NagZ subfamily.

It localises to the cytoplasm. The catalysed reaction is Hydrolysis of terminal non-reducing N-acetyl-D-hexosamine residues in N-acetyl-beta-D-hexosaminides.. The protein operates within cell wall biogenesis; peptidoglycan recycling. Functionally, plays a role in peptidoglycan recycling by cleaving the terminal beta-1,4-linked N-acetylglucosamine (GlcNAc) from peptide-linked peptidoglycan fragments, giving rise to free GlcNAc, anhydro-N-acetylmuramic acid and anhydro-N-acetylmuramic acid-linked peptides. The protein is Beta-hexosaminidase of Tolumonas auensis (strain DSM 9187 / NBRC 110442 / TA 4).